A 513-amino-acid chain; its full sequence is ATP synthase subunit alpha (513 aa).

170 to 177 is a binding site for ATP; it reads GDRQTGKT.

The protein belongs to the ATPase alpha/beta chains family. In terms of assembly, F-type ATPases have 2 components, CF(1) - the catalytic core - and CF(0) - the membrane proton channel. CF(1) has five subunits: alpha(3), beta(3), gamma(1), delta(1), epsilon(1). CF(0) has four main subunits: a(1), b(1), b'(1) and c(9-12).

The protein localises to the cell inner membrane. It catalyses the reaction ATP + H2O + 4 H(+)(in) = ADP + phosphate + 5 H(+)(out). Functionally, produces ATP from ADP in the presence of a proton gradient across the membrane. The alpha chain is a regulatory subunit. This is ATP synthase subunit alpha from Gloeobacter violaceus (strain ATCC 29082 / PCC 7421).